Consider the following 449-residue polypeptide: MDCPNMPLHINRRQMLLSAATAAGALALGPARDAFGQARVQITEGNVAPLPIAIPNFVAGTPSDNEVGGGVAQVITNNLKRSGLFAPIDQAAYVEKITNIDVPPQFKSWTSINAQALVTGRMTRQSDGRLKAEFRLWDVATGQQLAGQQYFTSPEYWRRIAHIISDQIYERLTGEKGYFDSRVVFIDESGPADRRVKRLALMDQDGANVRYLTRGSDLVLTPRFSPSTQEITYMEFGQGDPKVYLFNIETGQREIVGNFPGMSFAPRFSPDGQRIIMSLQQGGNSNLFVMDLRSKSTTRLTDTPAIDTSPSYSPDAARICFESDRGGKPQIYVMPASGGQAQRISFGDGSYSTPVWSPRGDYIAFTKQGGGQFAIGIMKPDGSGERILTSGFHNEGPTFAPNGRVLMFFRDPGGNAGPSLFTVDVSGRNELRVPTPGYASDPAWSPLLS.

Positions 1-36 are cleaved as a signal peptide; sequence MDCPNMPLHINRRQMLLSAATAAGALALGPARDAFG.

Belongs to the TolB family. In terms of assembly, the Tol-Pal system is composed of five core proteins: the inner membrane proteins TolA, TolQ and TolR, the periplasmic protein TolB and the outer membrane protein Pal. They form a network linking the inner and outer membranes and the peptidoglycan layer.

The protein localises to the periplasm. Functionally, part of the Tol-Pal system, which plays a role in outer membrane invagination during cell division and is important for maintaining outer membrane integrity. This Rhodopseudomonas palustris (strain HaA2) protein is Tol-Pal system protein TolB.